Reading from the N-terminus, the 96-residue chain is Co-chaperonin GroES (96 aa).

The protein belongs to the GroES chaperonin family. As to quaternary structure, heptamer of 7 subunits arranged in a ring. Interacts with the chaperonin GroEL.

The protein resides in the cytoplasm. Its function is as follows. Together with the chaperonin GroEL, plays an essential role in assisting protein folding. The GroEL-GroES system forms a nano-cage that allows encapsulation of the non-native substrate proteins and provides a physical environment optimized to promote and accelerate protein folding. GroES binds to the apical surface of the GroEL ring, thereby capping the opening of the GroEL channel. The chain is Co-chaperonin GroES from Methylorubrum populi (strain ATCC BAA-705 / NCIMB 13946 / BJ001) (Methylobacterium populi).